Reading from the N-terminus, the 486-residue chain is PTS system N-acetylmuramic acid-specific EIIBC component (486 aa).

One can recognise a PTS EIIB type-1 domain in the interval 1–89 (MAKITQTMIS…NKLIESVING (89 aa)). The active-site Phosphocysteine intermediate; for EIIB activity is the C28. The region spanning 127–486 (SKFATIFTPL…FFGSKDVDLS (360 aa)) is the PTS EIIC type-1 domain. A run of 10 helical transmembrane segments spans residues 129 to 149 (FATI…LLGF), 170 to 190 (LIAY…ILIG), 196 to 216 (AFGG…LGYN), 230 to 250 (FFGY…AAII), 268 to 288 (MILT…VVIM), 312 to 332 (AAIL…QGFV), 347 to 367 (LFPI…ALYF), 381 to 401 (GAII…VTLP), 411 to 431 (IGGA…LPVG), and 453 to 473 (IFAG…VGFL).

It is found in the cell inner membrane. The catalysed reaction is N-acetyl-beta-D-muramate(out) + N(pros)-phospho-L-histidyl-[protein] = N-acetyl-beta-D-muramate 6-phosphate(in) + L-histidyl-[protein]. In terms of biological role, the phosphoenolpyruvate-dependent sugar phosphotransferase system (sugar PTS), a major carbohydrate active transport system, catalyzes the phosphorylation of incoming sugar substrates concomitantly with their translocation across the cell membrane. This system is involved in N-acetylmuramic acid (MurNAc) transport, yielding cytoplasmic MurNAc-6-P. Is also able to take up anhydro-N-acetylmuramic acid (anhMurNAc), but cannot phosphorylate the carbon 6, probably because of the 1,6-anhydro ring. This chain is PTS system N-acetylmuramic acid-specific EIIBC component (murP), found in Vibrio vulnificus (strain CMCP6).